A 349-amino-acid polypeptide reads, in one-letter code: MLFAALRDVQWRKRRLVIAIVSTGLVFAMTLVLTGLVNGFRVEAERTVDSMGVDAFVVKAGAAGPFLGSTPFAQIDLPQVARAPGVLAAAPLATAPSTIRQGTSARNVTAFGAPEHGPGMPRVSDGRAPSTPDEVAVSSTLGRNLGDDLQVGARTLRIVGIVPESTALAKIPNIFLTTEGLQQLAYNGQPTISSIGIDGMPRQLPDGYQTVNRADAVSDLMRPLKVAVDAITVVAVLLWIVAALIVGSVVYLSALERLRDFAVFKAIGVPTRSILAGLALQAVVVALLAAVVGGILSLLLAPLFPMTVVVPLSAFVALPAIATVIGLLASVAGLRRVVAIDPALAFGGP.

A helical membrane pass occupies residues 17-37 (VIAIVSTGLVFAMTLVLTGLV). Residues 111 to 131 (FGAPEHGPGMPRVSDGRAPST) are disordered. 3 consecutive transmembrane segments (helical) span residues 230 to 250 (AITV…GSVV), 284 to 304 (VVAL…APLF), and 308 to 328 (VVVP…IGLL).

This sequence belongs to the ABC-4 integral membrane protein family.

It is found in the cell membrane. This is an uncharacterized protein from Mycobacterium bovis (strain ATCC BAA-935 / AF2122/97).